We begin with the raw amino-acid sequence, 931 residues long: Up-regulator of cell proliferation (931 aa).

Residue S3 is modified to Phosphoserine. In terms of domain architecture, VLIG-type G spans 689–929 (RSRLVVLSTV…NIQQLIELVR (241 aa)).

Belongs to the TRAFAC class dynamin-like GTPase superfamily. Very large inducible GTPase (VLIG) family. Strongly expressed in hepatitis B virus-infected liver and in HCC cells. Also highly expressed in well-differentiated gastric cancer tissues and various gastric cancer cell lines.

The protein localises to the cytoplasm. The protein resides in the nucleus. Functionally, may be involved in cell cycle progression through the regulation of cyclin D1 expression. May participate in the development of hepatocellular carcinoma (HCC) by promoting hepatocellular growth and survival. May play an important role in development of gastric cancer. The sequence is that of Up-regulator of cell proliferation (URGCP) from Homo sapiens (Human).